A 78-amino-acid polypeptide reads, in one-letter code: RNA-binding protein Hfq (78 aa).

In terms of domain architecture, Sm spans 10-69 (DPFLNALRREHVPVSIYLVNGIKLQGQVESFDQYVVLLKNTVTQMVYKHAISTVVPARPV).

Belongs to the Hfq family. As to quaternary structure, homohexamer.

RNA chaperone that binds small regulatory RNA (sRNAs) and mRNAs to facilitate mRNA translational regulation in response to envelope stress, environmental stress and changes in metabolite concentrations. Also binds with high specificity to tRNAs. This chain is RNA-binding protein Hfq, found in Dechloromonas aromatica (strain RCB).